The following is a 908-amino-acid chain: Protein translocase subunit SecA (908 aa).

Residues Gln87, 105-109 (GEGKT), and Asp512 contribute to the ATP site. The segment at 876-908 (QAPMIRDGEKVGRNDPCPCGSGRKYKQCHGKLS) is disordered. Zn(2+)-binding residues include Cys892, Cys894, Cys903, and His904. Residues 898 to 908 (RKYKQCHGKLS) show a composition bias toward basic residues.

This sequence belongs to the SecA family. As to quaternary structure, monomer and homodimer. Part of the essential Sec protein translocation apparatus which comprises SecA, SecYEG and auxiliary proteins SecDF-YajC and YidC. Zn(2+) serves as cofactor.

It localises to the cell inner membrane. The protein resides in the cytoplasm. It catalyses the reaction ATP + H2O + cellular proteinSide 1 = ADP + phosphate + cellular proteinSide 2.. Functionally, part of the Sec protein translocase complex. Interacts with the SecYEG preprotein conducting channel. Has a central role in coupling the hydrolysis of ATP to the transfer of proteins into and across the cell membrane, serving both as a receptor for the preprotein-SecB complex and as an ATP-driven molecular motor driving the stepwise translocation of polypeptide chains across the membrane. In Shewanella baltica (strain OS185), this protein is Protein translocase subunit SecA.